We begin with the raw amino-acid sequence, 338 residues long: Holliday junction branch migration complex subunit RuvB (338 aa).

Residues 1 to 14 are compositionally biased toward basic and acidic residues; the sequence is MENDHGILSDHPSG. The interval 1-21 is disordered; sequence MENDHGILSDHPSGEEESQVE. The tract at residues 3–185 is large ATPase domain (RuvB-L); that stretch reads NDHGILSDHP…FGIVEHMNYY (183 aa). ATP contacts are provided by residues Leu24, Arg25, Gly66, Lys69, Thr70, Thr71, 132 to 134, Arg175, Tyr185, and Arg222; that span reads EDY. Thr70 is a binding site for Mg(2+). Residues 186–256 form a small ATPAse domain (RuvB-S) region; that stretch reads TQDELTKIIF…IVKQALSLLQ (71 aa). A head domain (RuvB-H) region spans residues 259–338; it reads DRGLDEIDRK…LGIEYPTDKN (80 aa). DNA is bound by residues Arg314 and Arg319.

This sequence belongs to the RuvB family. Homohexamer. Forms an RuvA(8)-RuvB(12)-Holliday junction (HJ) complex. HJ DNA is sandwiched between 2 RuvA tetramers; dsDNA enters through RuvA and exits via RuvB. An RuvB hexamer assembles on each DNA strand where it exits the tetramer. Each RuvB hexamer is contacted by two RuvA subunits (via domain III) on 2 adjacent RuvB subunits; this complex drives branch migration. In the full resolvosome a probable DNA-RuvA(4)-RuvB(12)-RuvC(2) complex forms which resolves the HJ.

The protein localises to the cytoplasm. The catalysed reaction is ATP + H2O = ADP + phosphate + H(+). Its function is as follows. The RuvA-RuvB-RuvC complex processes Holliday junction (HJ) DNA during genetic recombination and DNA repair, while the RuvA-RuvB complex plays an important role in the rescue of blocked DNA replication forks via replication fork reversal (RFR). RuvA specifically binds to HJ cruciform DNA, conferring on it an open structure. The RuvB hexamer acts as an ATP-dependent pump, pulling dsDNA into and through the RuvAB complex. RuvB forms 2 homohexamers on either side of HJ DNA bound by 1 or 2 RuvA tetramers; 4 subunits per hexamer contact DNA at a time. Coordinated motions by a converter formed by DNA-disengaged RuvB subunits stimulates ATP hydrolysis and nucleotide exchange. Immobilization of the converter enables RuvB to convert the ATP-contained energy into a lever motion, pulling 2 nucleotides of DNA out of the RuvA tetramer per ATP hydrolyzed, thus driving DNA branch migration. The RuvB motors rotate together with the DNA substrate, which together with the progressing nucleotide cycle form the mechanistic basis for DNA recombination by continuous HJ branch migration. Branch migration allows RuvC to scan DNA until it finds its consensus sequence, where it cleaves and resolves cruciform DNA. This chain is Holliday junction branch migration complex subunit RuvB, found in Limosilactobacillus reuteri (strain DSM 20016) (Lactobacillus reuteri).